A 171-amino-acid polypeptide reads, in one-letter code: Small ribosomal subunit protein uS5 (171 aa).

Residues 16–79 (LREKMISVNR…EEARRKLVKI (64 aa)) form the S5 DRBM domain.

The protein belongs to the universal ribosomal protein uS5 family. Part of the 30S ribosomal subunit. Contacts proteins S4 and S8.

Functionally, with S4 and S12 plays an important role in translational accuracy. In terms of biological role, located at the back of the 30S subunit body where it stabilizes the conformation of the head with respect to the body. The polypeptide is Small ribosomal subunit protein uS5 (Thiobacillus denitrificans (strain ATCC 25259 / T1)).